The chain runs to 1377 residues: DNA-directed RNA polymerase subunit beta' (1377 aa).

Zn(2+)-binding residues include C60, C62, C75, and C78. Residues D449, D451, and D453 each coordinate Mg(2+). Residues C777, C851, C858, and C861 each coordinate Zn(2+).

This sequence belongs to the RNA polymerase beta' chain family. In terms of assembly, the RNAP catalytic core consists of 2 alpha, 1 beta, 1 beta' and 1 omega subunit. When a sigma factor is associated with the core the holoenzyme is formed, which can initiate transcription. Mg(2+) is required as a cofactor. Zn(2+) serves as cofactor.

It catalyses the reaction RNA(n) + a ribonucleoside 5'-triphosphate = RNA(n+1) + diphosphate. In terms of biological role, DNA-dependent RNA polymerase catalyzes the transcription of DNA into RNA using the four ribonucleoside triphosphates as substrates. The sequence is that of DNA-directed RNA polymerase subunit beta' from Borreliella burgdorferi (strain ZS7) (Borrelia burgdorferi).